A 444-amino-acid chain; its full sequence is Glutamate--tRNA ligase 1 (444 aa).

The 'HIGH' region signature appears at 10 to 20 (PSPTGRLHLGN). The 'KMSKS' region motif lies at 241 to 245 (GLSKR). Lysine 244 is a binding site for ATP.

It belongs to the class-I aminoacyl-tRNA synthetase family. Glutamate--tRNA ligase type 1 subfamily. As to quaternary structure, monomer.

It localises to the cytoplasm. It catalyses the reaction tRNA(Glu) + L-glutamate + ATP = L-glutamyl-tRNA(Glu) + AMP + diphosphate. Functionally, catalyzes the attachment of glutamate to tRNA(Glu) in a two-step reaction: glutamate is first activated by ATP to form Glu-AMP and then transferred to the acceptor end of tRNA(Glu). The polypeptide is Glutamate--tRNA ligase 1 (Rhodospirillum rubrum (strain ATCC 11170 / ATH 1.1.1 / DSM 467 / LMG 4362 / NCIMB 8255 / S1)).